Here is a 651-residue protein sequence, read N- to C-terminus: Beta-glucuronidase (651 aa).

An N-terminal signal peptide occupies residues 1-22; sequence MLRGPAAVWAALGPLLWACGLA. 2 N-linked (GlcNAc...) asparagine glycosylation sites follow: asparagine 172 and asparagine 419. Glutamate 450 functions as the Proton donor in the catalytic mechanism. The N-linked (GlcNAc...) asparagine glycan is linked to asparagine 630.

Belongs to the glycosyl hydrolase 2 family. In terms of assembly, homotetramer.

It localises to the lysosome. It catalyses the reaction a beta-D-glucuronoside + H2O = D-glucuronate + an alcohol. Inhibited by L-aspartic acid. In terms of biological role, plays an important role in the degradation of dermatan and keratan sulfates. The sequence is that of Beta-glucuronidase (GUSB) from Felis catus (Cat).